The following is a 410-amino-acid chain: Platelet-activating factor acetylhydrolase IB subunit alpha (410 aa).

The interval 1–38 (MVLSQRQRDELNRAIADYLRSNGYEEAYSVFKKEAELD) is required for self-association and interaction with PAFAH1B2 and PAFAH1B3. An interaction with NDE1 region spans residues 1–66 (MVLSQRQRDE…SVIRLQKKVM (66 aa)). Residues 1-102 (MVLSQRQRDE…EWIPRPPEKY (102 aa)) are interaction with NDEL1. The 33-residue stretch at 7-39 (QRDELNRAIADYLRSNGYEEAYSVFKKEAELDM) folds into the LisH domain. At Lys53 the chain carries N6-acetyllysine. A coiled-coil region spans residues 56 to 82 (TSVIRLQKKVMELESKLNEAKEEFTSG). The interval 83–410 (GPLGQKRDPK…DQTVKVWECR (328 aa)) is interaction with dynein and dynactin. WD repeat units lie at residues 106 to 147 (GHRS…RTLK), 148 to 187 (GHTD…CIRT), 190 to 229 (GHDH…CVKT), 232 to 271 (GHRE…CKAE), 274 to 333 (EHEH…CLMT), 336 to 377 (GHDN…KTLN), and 378 to 410 (AHEH…WECR). Ser109 carries the phosphoserine modification. The segment at 367–409 (YKNKRCMKTLNAHEHFVTSLDFHKTAPYVVTGSVDQTVKVWEC) is interaction with DCX. An interaction with NDEL1 region spans residues 388–410 (FHKTAPYVVTGSVDQTVKVWECR).

It belongs to the WD repeat LIS1/nudF family. Can self-associate. Component of the cytosolic PAF-AH (I) heterotetrameric enzyme, which is composed of PAFAH1B1 (beta), PAFAH1B2 (alpha2) and PAFAH1B3 (alpha1) subunits. The catalytic activity of the enzyme resides in the alpha1 (PAFAH1B3) and alpha2 (PAFAH1B2) subunits, whereas the beta subunit (PAFAH1B1) has regulatory activity. Trimer formation is not essential for the catalytic activity. Interacts with the catalytic dimer of PAF-AH (I) heterotetrameric enzyme: interacts with PAFAH1B2 homodimer (alpha2/alpha2 homodimer), PAFAH1B3 homodimer (alpha1/alpha1 homodimer) and PAFAH1B2-PAFAH1B3 heterodimer (alpha2/alpha1 heterodimer). Interacts with DCX, dynein, dynactin, IQGAP1, KATNB1, NDE1, NDEL1, NUDC and RSN. Interacts with DISC1, and this interaction is enhanced by NDEL1. Interacts with DAB1 when DAB1 is phosphorylated in response to RELN/reelin signaling. Interacts with INTS13. Interacts with DCDC1.

Its subcellular location is the cytoplasm. The protein localises to the cytoskeleton. The protein resides in the microtubule organizing center. It is found in the centrosome. It localises to the spindle. Its subcellular location is the nucleus membrane. Regulatory subunit (beta subunit) of the cytosolic type I platelet-activating factor (PAF) acetylhydrolase (PAF-AH (I)), an enzyme that catalyzes the hydrolyze of the acetyl group at the sn-2 position of PAF and its analogs and participates in PAF inactivation. Regulates the PAF-AH (I) activity in a catalytic dimer composition-dependent manner. Positively regulates the activity of the minus-end directed microtubule motor protein dynein. May enhance dynein-mediated microtubule sliding by targeting dynein to the microtubule plus end. Required for several dynein- and microtubule-dependent processes such as the maintenance of Golgi integrity, the peripheral transport of microtubule fragments and the coupling of the nucleus and centrosome. Required during brain development for the proliferation of neuronal precursors and the migration of newly formed neurons from the ventricular/subventricular zone toward the cortical plate. Neuronal migration involves a process called nucleokinesis, whereby migrating cells extend an anterior process into which the nucleus subsequently translocates. During nucleokinesis dynein at the nuclear surface may translocate the nucleus towards the centrosome by exerting force on centrosomal microtubules. Also required for proper activation of Rho GTPases and actin polymerization at the leading edge of locomoting cerebellar neurons and postmigratory hippocampal neurons in response to calcium influx triggered via NMDA receptors. May also play a role in other forms of cell locomotion including the migration of fibroblasts during wound healing. Required for dynein recruitment to microtubule plus ends and BICD2-bound cargos. May modulate the Reelin pathway through interaction of the PAF-AH (I) catalytic dimer with VLDLR. This Macaca fascicularis (Crab-eating macaque) protein is Platelet-activating factor acetylhydrolase IB subunit alpha.